The sequence spans 472 residues: Coronin-6 (472 aa).

WD repeat units follow at residues 79–119 (GHTG…PVRN), 129–169 (GHSK…VLLS), 173–212 (IHPDVIHSVCWNSNGSLLATTCKDKTLRIIDPRKSQVVAE), 216–259 (AHEG…EPVA), and 264–304 (DTSN…PFVH). Positions 409 to 434 (NILDVRPPASPRRSQSASEAPLSQQH) are disordered. Low complexity predominate over residues 419–429 (PRRSQSASEAP). The stretch at 430-469 (LSQQHTLETLLEEMKALRERVQAQEERITALENMLCELVD) forms a coiled coil.

The chain is Coronin-6 (Coro6) from Rattus norvegicus (Rat).